The chain runs to 129 residues: Small ribosomal subunit protein uS8 (129 aa).

The protein belongs to the universal ribosomal protein uS8 family. As to quaternary structure, part of the 30S ribosomal subunit. Contacts proteins S5 and S12.

Functionally, one of the primary rRNA binding proteins, it binds directly to 16S rRNA central domain where it helps coordinate assembly of the platform of the 30S subunit. The protein is Small ribosomal subunit protein uS8 of Spiroplasma kunkelii.